The following is a 248-amino-acid chain: Putative mutator protein MutT4 (248 aa).

Residues Met-1–Glu-64 are disordered. Basic residues predominate over residues Ser-9–Arg-20. Over residues Ala-31–Ala-44 the composition is skewed to low complexity. Over residues Lys-45 to Thr-57 the composition is skewed to basic residues. Positions Val-62–Asp-198 constitute a Nudix hydrolase domain. Residues Gly-103, Glu-118, Glu-121, and Glu-122 each coordinate Mg(2+). Residues Gly-103–Gly-124 carry the Nudix box motif. Positions Leu-204–Pro-248 are disordered. Positions Pro-220–Ala-230 are enriched in basic residues.

Belongs to the Nudix hydrolase family. The cofactor is Mg(2+). Mn(2+) serves as cofactor.

May be involved in the GO system responsible for removing an oxidatively damaged form of guanine (7,8-dihydro-8-oxoguanine, 8-oxo-dGTP) from DNA and the nucleotide pool. This chain is Putative mutator protein MutT4 (mutT4), found in Mycobacterium tuberculosis (strain CDC 1551 / Oshkosh).